Reading from the N-terminus, the 421-residue chain is 3-isopropylmalate dehydratase large subunit (421 aa).

Residues Cys302, Cys362, and Cys365 each contribute to the [4Fe-4S] cluster site.

Belongs to the aconitase/IPM isomerase family. LeuC type 2 subfamily. In terms of assembly, heterodimer of LeuC and LeuD. [4Fe-4S] cluster serves as cofactor.

It catalyses the reaction (2R,3S)-3-isopropylmalate = (2S)-2-isopropylmalate. The protein operates within amino-acid biosynthesis; L-leucine biosynthesis; L-leucine from 3-methyl-2-oxobutanoate: step 2/4. In terms of biological role, catalyzes the isomerization between 2-isopropylmalate and 3-isopropylmalate, via the formation of 2-isopropylmaleate. This chain is 3-isopropylmalate dehydratase large subunit, found in Nitratiruptor sp. (strain SB155-2).